A 112-amino-acid polypeptide reads, in one-letter code: Peptidyl-prolyl cis-trans isomerase (112 aa).

Residues 1–22 are disordered; it reads MGVEKQVISSGNGQDFPKPGDR. In terms of domain architecture, PPIase FKBP-type spans 20-108; sequence GDRITMHYTG…LFDVELLAIN (89 aa).

It belongs to the FKBP-type PPIase family. FKBP1 subfamily.

It localises to the cytoplasm. The protein localises to the nucleus. The catalysed reaction is [protein]-peptidylproline (omega=180) = [protein]-peptidylproline (omega=0). Its function is as follows. PPIases accelerate the folding of proteins. It catalyzes the cis-trans isomerization of proline imidic peptide bonds in oligopeptides. Has an important role in sexual development and serves as the target for rapamycin action. This Schizosaccharomyces pombe (strain 972 / ATCC 24843) (Fission yeast) protein is Peptidyl-prolyl cis-trans isomerase (fkh1).